The sequence spans 345 residues: Trace amine-associated receptor 6 (345 aa).

At 1–32 (MGSNSSPPAVLQLCYENVNGSCVKTPYSPGPR) the chain is on the extracellular side. N-linked (GlcNAc...) asparagine glycosylation is present at Asn-19. Cystine bridges form between Cys-22-Cys-186 and Cys-105-Cys-190. Residues 33–53 (VLLYAVFGFGAVLAVFGNLLV) form a helical membrane-spanning segment. Over 54-68 (MISILHFKQLHSPTN) the chain is Cytoplasmic. A helical membrane pass occupies residues 69–89 (FLIASLACADFWVGVSVMPFS). Topologically, residues 90 to 107 (MVRSIESCWYFGRSFCTF) are extracellular. The chain crosses the membrane as a helical span at residues 108–128 (HTCCDVAFCYSSLFHLSFISI). The Cytoplasmic segment spans residues 129-147 (DRYIAVTDPLVYPTKFTVS). A helical membrane pass occupies residues 148 to 168 (VSGICISISWILPLAYSGAVF). The Extracellular portion of the chain corresponds to 169–202 (YTGVYADGLEEVSDAVNCVGGCQVVVNQNWVLID). The helical transmembrane segment at 203 to 223 (FLSFLIPTLVMIILYGNIFLV) threads the bilayer. Over 224–259 (ARQQAKKIETVGNKAESSSESYKARVARRERKAAKT) the chain is Cytoplasmic. A helical transmembrane segment spans residues 260–276 (LGITVVAFMISWLPYSI). Over 277–282 (DSLVDA) the chain is Extracellular. The chain crosses the membrane as a helical span at residues 283–302 (FMGFITPAYIYEICVWCAYY). The Cytoplasmic portion of the chain corresponds to 303 to 345 (NSAMNPLIYALFYPWFKKAIKVIMSGQVFKNSSATMNLFSEQI).

The protein belongs to the G-protein coupled receptor 1 family.

It localises to the cell membrane. Its function is as follows. Olfactory receptor specific for trace amines, such as beta-phenylethylamine (beta-PEA). Trace amine compounds are enriched in animal body fluids and act on trace amine-associated receptors (TAARs) to elicit both intraspecific and interspecific innate behaviors. Beta-PEA-binding causes a conformation change that triggers signaling via G(s)-class of G alpha proteins (GNAL or GNAS). The chain is Trace amine-associated receptor 6 (Taar6) from Rattus norvegicus (Rat).